Consider the following 621-residue polypeptide: Chaperone protein HtpG (621 aa).

The segment at 1-328 (MTQEKKKFDA…SEDLPLNISR (328 aa)) is a; substrate-binding. Residues 329–544 (ESLQHNSVLE…DSAMDIRMER (216 aa)) form a b region. Residues 475-495 (SDIDVEQTTSQSEDKNTHSKK) are disordered. A compositionally biased stretch (basic and acidic residues) spans 486 to 495 (SEDKNTHSKK). Residues 545 to 621 (FLIEQKQITA…LNDIVQKAIL (77 aa)) are c.

Belongs to the heat shock protein 90 family. As to quaternary structure, homodimer.

The protein resides in the cytoplasm. Its function is as follows. Molecular chaperone. Has ATPase activity. The polypeptide is Chaperone protein HtpG (Rickettsia akari (strain Hartford)).